Consider the following 236-residue polypeptide: MAIYLTELDSTFNFPSPYEALSDPNGLLAFGGDLDPHRILSGYYQGIFPWYGPGEPILWWSPSPRAVFDPLTFKPSKSLKKFQRKHQYKVTINQATEHVIQLCSSTRPADETWLNEEMQAAYIQLSNLGHCHSVEVWHDNTLVGGLYGISVGQLFCGESMFSLKDNASKIALWYLCTHLASKHGQLIDCQVMNPHLASLGAFELDRDEFIQKLLSLREKQTASDTFTPQVLQDSES.

Belongs to the L/F-transferase family.

It localises to the cytoplasm. It carries out the reaction N-terminal L-lysyl-[protein] + L-leucyl-tRNA(Leu) = N-terminal L-leucyl-L-lysyl-[protein] + tRNA(Leu) + H(+). The catalysed reaction is N-terminal L-arginyl-[protein] + L-leucyl-tRNA(Leu) = N-terminal L-leucyl-L-arginyl-[protein] + tRNA(Leu) + H(+). It catalyses the reaction L-phenylalanyl-tRNA(Phe) + an N-terminal L-alpha-aminoacyl-[protein] = an N-terminal L-phenylalanyl-L-alpha-aminoacyl-[protein] + tRNA(Phe). Functions in the N-end rule pathway of protein degradation where it conjugates Leu, Phe and, less efficiently, Met from aminoacyl-tRNAs to the N-termini of proteins containing an N-terminal arginine or lysine. This is Leucyl/phenylalanyl-tRNA--protein transferase from Vibrio parahaemolyticus serotype O3:K6 (strain RIMD 2210633).